The sequence spans 174 residues: MSSGNQTFLIGKVSATHGVRGQLRITSFSGDMDSFMALRSVMIKKPGGGMETLAVAEAKAHGKKIILSLKGYTDINDVLHLVGREIYVLRDQLPLLSDGEYYWCDLLGLQVMTEDGDILGELVDIISTGSNDVYVVHGGGDKEILIPALDDVVLDVDTVAGRMTVSLPEGLLDL.

A PRC barrel domain is found at 97–171; that stretch reads SDGEYYWCDL…RMTVSLPEGL (75 aa).

This sequence belongs to the RimM family. In terms of assembly, binds ribosomal protein uS19.

It is found in the cytoplasm. Functionally, an accessory protein needed during the final step in the assembly of 30S ribosomal subunit, possibly for assembly of the head region. Essential for efficient processing of 16S rRNA. May be needed both before and after RbfA during the maturation of 16S rRNA. It has affinity for free ribosomal 30S subunits but not for 70S ribosomes. The sequence is that of Ribosome maturation factor RimM from Geotalea daltonii (strain DSM 22248 / JCM 15807 / FRC-32) (Geobacter daltonii).